We begin with the raw amino-acid sequence, 24 residues long: Unknown protein 6 (24 aa).

The protein is Unknown protein 6 of Lonomia obliqua (Moth).